The sequence spans 150 residues: Cell division protein SepF (150 aa).

Belongs to the SepF family. As to quaternary structure, homodimer. Interacts with FtsZ.

Its subcellular location is the cytoplasm. Its function is as follows. Cell division protein that is part of the divisome complex and is recruited early to the Z-ring. Probably stimulates Z-ring formation, perhaps through the cross-linking of FtsZ protofilaments. Its function overlaps with FtsA. This chain is Cell division protein SepF, found in Clostridium botulinum (strain Kyoto / Type A2).